A 441-amino-acid chain; its full sequence is UDP-N-acetylglucosamine--N-acetylmuramyl-(pentapeptide) pyrophosphoryl-undecaprenol N-acetylglucosamine transferase (441 aa).

Residues 28–30 (TGG), Asn-140, Arg-176, Ser-204, Ile-257, and Gln-302 contribute to the UDP-N-acetyl-alpha-D-glucosamine site.

The protein belongs to the glycosyltransferase 28 family. MurG subfamily.

The protein resides in the cell inner membrane. The catalysed reaction is di-trans,octa-cis-undecaprenyl diphospho-N-acetyl-alpha-D-muramoyl-L-alanyl-D-glutamyl-meso-2,6-diaminopimeloyl-D-alanyl-D-alanine + UDP-N-acetyl-alpha-D-glucosamine = di-trans,octa-cis-undecaprenyl diphospho-[N-acetyl-alpha-D-glucosaminyl-(1-&gt;4)]-N-acetyl-alpha-D-muramoyl-L-alanyl-D-glutamyl-meso-2,6-diaminopimeloyl-D-alanyl-D-alanine + UDP + H(+). Its pathway is cell wall biogenesis; peptidoglycan biosynthesis. Cell wall formation. Catalyzes the transfer of a GlcNAc subunit on undecaprenyl-pyrophosphoryl-MurNAc-pentapeptide (lipid intermediate I) to form undecaprenyl-pyrophosphoryl-MurNAc-(pentapeptide)GlcNAc (lipid intermediate II). The protein is UDP-N-acetylglucosamine--N-acetylmuramyl-(pentapeptide) pyrophosphoryl-undecaprenol N-acetylglucosamine transferase of Xanthomonas oryzae pv. oryzae (strain KACC10331 / KXO85).